We begin with the raw amino-acid sequence, 313 residues long: 3-ketodihydrosphingosine reductase TSC10 (313 aa).

L12 contributes to the NADP(+) binding site. Residues G15, S17, and G19 each coordinate NADPH. Residues 15 to 19 carry the GXSXG motif; the sequence is GGSQG. L20 is a binding site for NADP(+). Positions 47, 51, and 86 each coordinate NADPH. D86 provides a ligand contact to NADP(+). The active-site Proton donor is the S160. Y174, K178, and S207 together coordinate NADP(+). Catalysis depends on Y174, which acts as the Proton acceptor. Catalysis depends on K178, which acts as the Lowers pKa of active site Tyr. Residues 278-298 traverse the membrane as a helical segment; sequence VFSWILGALLNITIVPIYMLI.

It belongs to the short-chain dehydrogenases/reductases (SDR) family.

It is found in the endoplasmic reticulum membrane. The catalysed reaction is sphinganine + NADP(+) = 3-oxosphinganine + NADPH + H(+). The protein operates within lipid metabolism; sphingolipid metabolism. Its function is as follows. Catalyzes the reduction of 3'-oxosphinganine (3-ketodihydrosphingosine/KDS) to sphinganine (dihydrosphingosine/DHS), the second step of de novo sphingolipid biosynthesis. The protein is 3-ketodihydrosphingosine reductase TSC10 (TSC10) of Kluyveromyces lactis (strain ATCC 8585 / CBS 2359 / DSM 70799 / NBRC 1267 / NRRL Y-1140 / WM37) (Yeast).